Consider the following 277-residue polypeptide: Bifunctional protein FolD (277 aa).

NADP(+) contacts are provided by residues 164–166 (GRS), Ser-189, and Thr-230.

This sequence belongs to the tetrahydrofolate dehydrogenase/cyclohydrolase family. In terms of assembly, homodimer.

The catalysed reaction is (6R)-5,10-methylene-5,6,7,8-tetrahydrofolate + NADP(+) = (6R)-5,10-methenyltetrahydrofolate + NADPH. The enzyme catalyses (6R)-5,10-methenyltetrahydrofolate + H2O = (6R)-10-formyltetrahydrofolate + H(+). The protein operates within one-carbon metabolism; tetrahydrofolate interconversion. In terms of biological role, catalyzes the oxidation of 5,10-methylenetetrahydrofolate to 5,10-methenyltetrahydrofolate and then the hydrolysis of 5,10-methenyltetrahydrofolate to 10-formyltetrahydrofolate. The protein is Bifunctional protein FolD of Clostridium perfringens (strain SM101 / Type A).